The sequence spans 360 residues: Peptide chain release factor 1 (360 aa).

An N5-methylglutamine modification is found at Gln235.

This sequence belongs to the prokaryotic/mitochondrial release factor family. In terms of processing, methylated by PrmC. Methylation increases the termination efficiency of RF1.

It localises to the cytoplasm. Functionally, peptide chain release factor 1 directs the termination of translation in response to the peptide chain termination codons UAG and UAA. This chain is Peptide chain release factor 1, found in Burkholderia ambifaria (strain MC40-6).